The primary structure comprises 269 residues: Shikimate dehydrogenase (NADP(+)) (269 aa).

Shikimate is bound by residues 17-19 and threonine 64; that span reads SKS. Residue lysine 68 is the Proton acceptor of the active site. Aspartate 80 serves as a coordination point for NADP(+). Shikimate is bound by residues asparagine 89 and aspartate 105. Residues 130–134, 154–159, and methionine 213 each bind NADP(+); these read GAGGA and NRTRAK. Tyrosine 215 serves as a coordination point for shikimate. Glycine 237 serves as a coordination point for NADP(+).

It belongs to the shikimate dehydrogenase family. As to quaternary structure, homodimer.

It catalyses the reaction shikimate + NADP(+) = 3-dehydroshikimate + NADPH + H(+). It participates in metabolic intermediate biosynthesis; chorismate biosynthesis; chorismate from D-erythrose 4-phosphate and phosphoenolpyruvate: step 4/7. Involved in the biosynthesis of the chorismate, which leads to the biosynthesis of aromatic amino acids. Catalyzes the reversible NADPH linked reduction of 3-dehydroshikimate (DHSA) to yield shikimate (SA). The protein is Shikimate dehydrogenase (NADP(+)) of Neisseria gonorrhoeae (strain ATCC 700825 / FA 1090).